The sequence spans 345 residues: Cuticle collagen 14 (345 aa).

3 triple-helical region regions span residues 156–185, 207–263, and 268–333; these read GPPG…PGPP, GDGG…PGTY, and GPAG…PGSC. Residues 161–345 form a disordered region; it reads AGDGGRDGAD…CPPARLAPGY (185 aa). 3 stretches are compositionally biased toward pro residues: residues 179–191, 198–223, and 278–290; these read IGPP…PGPD, PQCP…PPGA, and RPGP…PAGP. Residues 292–304 show a composition bias toward gly residues; it reads GENGKGGGQGPSG.

The protein belongs to the cuticular collagen family. As to quaternary structure, collagen polypeptide chains are complexed within the cuticle by disulfide bonds and other types of covalent cross-links.

Its function is as follows. Nematode cuticles are composed largely of collagen-like proteins. The cuticle functions both as an exoskeleton and as a barrier to protect the worm from its environment. The sequence is that of Cuticle collagen 14 (col-14) from Caenorhabditis elegans.